The chain runs to 188 residues: Putative manganese efflux pump MntP (188 aa).

Helical transmembrane passes span 1–21 (MLIQ…AVSI), 40–60 (LWFG…ASTF), 64–84 (VTAV…GNMV), 105–127 (HMLP…FAFM), 131–153 (IWLS…LYIG), and 166–186 (IAGG…HLGF).

The protein belongs to the MntP (TC 9.B.29) family.

The protein resides in the cell membrane. In terms of biological role, probably functions as a manganese efflux pump. The polypeptide is Putative manganese efflux pump MntP (Bifidobacterium adolescentis (strain ATCC 15703 / DSM 20083 / NCTC 11814 / E194a)).